A 363-amino-acid polypeptide reads, in one-letter code: NAD(P)H-quinone oxidoreductase subunit 1, chloroplastic (363 aa).

A run of 6 helical transmembrane segments spans residues 30–50 (LIPI…IVWL), 104–124 (IAVI…HLVL), 127–147 (LSIG…GLLM), 248–268 (YSGI…LVSS), 300–320 (VFGT…FLFI), and 343–363 (FLLP…LISL).

This sequence belongs to the complex I subunit 1 family. As to quaternary structure, NDH is composed of at least 16 different subunits, 5 of which are encoded in the nucleus.

The protein localises to the plastid. It localises to the chloroplast thylakoid membrane. It carries out the reaction a plastoquinone + NADH + (n+1) H(+)(in) = a plastoquinol + NAD(+) + n H(+)(out). The catalysed reaction is a plastoquinone + NADPH + (n+1) H(+)(in) = a plastoquinol + NADP(+) + n H(+)(out). In terms of biological role, NDH shuttles electrons from NAD(P)H:plastoquinone, via FMN and iron-sulfur (Fe-S) centers, to quinones in the photosynthetic chain and possibly in a chloroplast respiratory chain. The immediate electron acceptor for the enzyme in this species is believed to be plastoquinone. Couples the redox reaction to proton translocation, and thus conserves the redox energy in a proton gradient. In Lactuca sativa (Garden lettuce), this protein is NAD(P)H-quinone oxidoreductase subunit 1, chloroplastic.